A 177-amino-acid chain; its full sequence is ATP synthase subunit b (177 aa).

The helical transmembrane segment at 19–39 (LFPNLPNFIAHVIATIVLVVI) threads the bilayer.

This sequence belongs to the ATPase B chain family. F-type ATPases have 2 components, F(1) - the catalytic core - and F(0) - the membrane proton channel. F(1) has five subunits: alpha(3), beta(3), gamma(1), delta(1), epsilon(1). F(0) has three main subunits: a(1), b(2) and c(10-14). The alpha and beta chains form an alternating ring which encloses part of the gamma chain. F(1) is attached to F(0) by a central stalk formed by the gamma and epsilon chains, while a peripheral stalk is formed by the delta and b chains.

It is found in the cell membrane. Functionally, f(1)F(0) ATP synthase produces ATP from ADP in the presence of a proton or sodium gradient. F-type ATPases consist of two structural domains, F(1) containing the extramembraneous catalytic core and F(0) containing the membrane proton channel, linked together by a central stalk and a peripheral stalk. During catalysis, ATP synthesis in the catalytic domain of F(1) is coupled via a rotary mechanism of the central stalk subunits to proton translocation. Its function is as follows. Component of the F(0) channel, it forms part of the peripheral stalk, linking F(1) to F(0). The chain is ATP synthase subunit b from Mesoplasma florum (strain ATCC 33453 / NBRC 100688 / NCTC 11704 / L1) (Acholeplasma florum).